Reading from the N-terminus, the 355-residue chain is UDP-N-acetylglucosamine--N-acetylmuramyl-(pentapeptide) pyrophosphoryl-undecaprenol N-acetylglucosamine transferase (355 aa).

Residues 13–15 (TGG), Asn-125, Arg-162, Ser-190, Ile-244, and Gln-289 contribute to the UDP-N-acetyl-alpha-D-glucosamine site.

The protein belongs to the glycosyltransferase 28 family. MurG subfamily.

It localises to the cell inner membrane. It catalyses the reaction di-trans,octa-cis-undecaprenyl diphospho-N-acetyl-alpha-D-muramoyl-L-alanyl-D-glutamyl-meso-2,6-diaminopimeloyl-D-alanyl-D-alanine + UDP-N-acetyl-alpha-D-glucosamine = di-trans,octa-cis-undecaprenyl diphospho-[N-acetyl-alpha-D-glucosaminyl-(1-&gt;4)]-N-acetyl-alpha-D-muramoyl-L-alanyl-D-glutamyl-meso-2,6-diaminopimeloyl-D-alanyl-D-alanine + UDP + H(+). The protein operates within cell wall biogenesis; peptidoglycan biosynthesis. In terms of biological role, cell wall formation. Catalyzes the transfer of a GlcNAc subunit on undecaprenyl-pyrophosphoryl-MurNAc-pentapeptide (lipid intermediate I) to form undecaprenyl-pyrophosphoryl-MurNAc-(pentapeptide)GlcNAc (lipid intermediate II). In Neisseria meningitidis serogroup C (strain 053442), this protein is UDP-N-acetylglucosamine--N-acetylmuramyl-(pentapeptide) pyrophosphoryl-undecaprenol N-acetylglucosamine transferase.